A 60-amino-acid polypeptide reads, in one-letter code: Large ribosomal subunit protein uL30 (60 aa).

It belongs to the universal ribosomal protein uL30 family. In terms of assembly, part of the 50S ribosomal subunit.

In Leifsonia xyli subsp. xyli (strain CTCB07), this protein is Large ribosomal subunit protein uL30.